The chain runs to 459 residues: DNA polymerase subunit gamma-2 (459 aa).

In terms of assembly, heterotrimer composed of a catalytic subunit and a homodimer of accessory subunits (POLG:POLG2).

It localises to the mitochondrion. Its subcellular location is the mitochondrion matrix. The protein localises to the mitochondrion nucleoid. Its function is as follows. Accessory subunit of DNA polymerase gamma solely responsible for replication of mitochondrial DNA (mtDNA). Acts as an allosteric regulator of the holoenzyme activities. Enhances the polymerase activity and the processivity of POLG by increasing its interactions with the DNA template. Suppresses POLG exonucleolytic proofreading especially toward homopolymeric templates bearing mismatched termini. Binds to single-stranded DNA. The polypeptide is DNA polymerase subunit gamma-2 (Polg2) (Mus musculus (Mouse)).